A 440-amino-acid polypeptide reads, in one-letter code: Chromosome partition protein MukF (440 aa).

The tract at residues 208–236 (LSETSGTLRELQDTLEAAGDKLQANLLQI) is leucine-zipper.

Belongs to the MukF family. In terms of assembly, interacts, and probably forms a ternary complex, with MukE and MukB via its C-terminal region. The complex formation is stimulated by calcium or magnesium. It is required for an interaction between MukE and MukB.

It is found in the cytoplasm. The protein resides in the nucleoid. Involved in chromosome condensation, segregation and cell cycle progression. May participate in facilitating chromosome segregation by condensation DNA from both sides of a centrally located replisome during cell division. Not required for mini-F plasmid partitioning. Probably acts via its interaction with MukB and MukE. Overexpression results in anucleate cells. It has a calcium binding activity. The chain is Chromosome partition protein MukF from Cronobacter sakazakii (strain ATCC BAA-894) (Enterobacter sakazakii).